We begin with the raw amino-acid sequence, 265 residues long: 3-methyl-2-oxobutanoate hydroxymethyltransferase (265 aa).

Mg(2+) is bound by residues aspartate 45 and aspartate 84. 3-methyl-2-oxobutanoate is bound by residues 45–46 (DS), aspartate 84, and lysine 114. Glutamate 116 contacts Mg(2+). Glutamate 183 serves as the catalytic Proton acceptor.

The protein belongs to the PanB family. In terms of assembly, homodecamer; pentamer of dimers. The cofactor is Mg(2+).

It localises to the cytoplasm. The catalysed reaction is 3-methyl-2-oxobutanoate + (6R)-5,10-methylene-5,6,7,8-tetrahydrofolate + H2O = 2-dehydropantoate + (6S)-5,6,7,8-tetrahydrofolate. It participates in cofactor biosynthesis; (R)-pantothenate biosynthesis; (R)-pantoate from 3-methyl-2-oxobutanoate: step 1/2. Its function is as follows. Catalyzes the reversible reaction in which hydroxymethyl group from 5,10-methylenetetrahydrofolate is transferred onto alpha-ketoisovalerate to form ketopantoate. The protein is 3-methyl-2-oxobutanoate hydroxymethyltransferase of Salinibacter ruber (strain DSM 13855 / M31).